The chain runs to 494 residues: Anthranilate synthase component 1 (494 aa).

Residues Ser52 and 274 to 276 (PYM) each bind L-tryptophan. Residue 309-310 (GT) coordinates chorismate. Glu336 serves as a coordination point for Mg(2+). Chorismate contacts are provided by residues Tyr424, Arg444, 458–460 (GAG), and Gly460. Mg(2+) is bound at residue Glu473.

The protein belongs to the anthranilate synthase component I family. As to quaternary structure, heterotetramer consisting of two non-identical subunits: a beta subunit (TrpG) and a large alpha subunit (TrpE). Mg(2+) is required as a cofactor.

The catalysed reaction is chorismate + L-glutamine = anthranilate + pyruvate + L-glutamate + H(+). It functions in the pathway amino-acid biosynthesis; L-tryptophan biosynthesis; L-tryptophan from chorismate: step 1/5. Feedback inhibited by tryptophan. Functionally, part of a heterotetrameric complex that catalyzes the two-step biosynthesis of anthranilate, an intermediate in the biosynthesis of L-tryptophan. In the first step, the glutamine-binding beta subunit (TrpG) of anthranilate synthase (AS) provides the glutamine amidotransferase activity which generates ammonia as a substrate that, along with chorismate, is used in the second step, catalyzed by the large alpha subunit of AS (TrpE) to produce anthranilate. In the absence of TrpG, TrpE can synthesize anthranilate directly from chorismate and high concentrations of ammonia. The chain is Anthranilate synthase component 1 (trpE) from Aquifex aeolicus (strain VF5).